The sequence spans 458 residues: Argininosuccinate lyase (458 aa).

The protein belongs to the lyase 1 family. Argininosuccinate lyase subfamily.

The protein localises to the cytoplasm. The enzyme catalyses 2-(N(omega)-L-arginino)succinate = fumarate + L-arginine. It participates in amino-acid biosynthesis; L-arginine biosynthesis; L-arginine from L-ornithine and carbamoyl phosphate: step 3/3. This chain is Argininosuccinate lyase, found in Bacillus velezensis (strain DSM 23117 / BGSC 10A6 / LMG 26770 / FZB42) (Bacillus amyloliquefaciens subsp. plantarum).